Here is a 229-residue protein sequence, read N- to C-terminus: PKHD-type hydroxylase OCAR_6723/OCA5_c13470 (229 aa).

In terms of domain architecture, Fe2OG dioxygenase spans 78 to 180 (HIFPPLFNRY…RVASFFWLQS (103 aa)). Fe cation is bound by residues histidine 98, aspartate 100, and histidine 161. Arginine 171 is a binding site for 2-oxoglutarate.

Fe(2+) is required as a cofactor. The cofactor is L-ascorbate.

The protein is PKHD-type hydroxylase OCAR_6723/OCA5_c13470 of Afipia carboxidovorans (strain ATCC 49405 / DSM 1227 / KCTC 32145 / OM5) (Oligotropha carboxidovorans).